The sequence spans 4466 residues: Dynein beta chain, ciliary (4466 aa).

The stem stretch occupies residues 1 to 1813 (MGDVVDARLD…YANICDAQFK (1813 aa)). 154–161 (AGQVKGKT) is a binding site for ATP. Coiled-coil stretches lie at residues 482–502 (QEFL…DRRL), 627–643 (QKYE…EQKV), 734–805 (VLEV…WTKQ), 1036–1056 (TLDQ…EADE), 1306–1337 (WLEI…AWDA), and 1443–1468 (LLKS…MTSK). AAA stretches follow at residues 1814 to 2035 (YSYE…VLVV), 2095 to 2316 (KVVK…IRFK), 2422 to 2669 (ELDP…VFQG), and 2767 to 3016 (TYNE…ERRY). ATP is bound by residues 1852 to 1859 (GPAGTGKT), 2133 to 2140 (GNAGTGKS), 2460 to 2467 (GNAGLGKS), and 2805 to 2812 (GVGGSGKQ). Coiled coils occupy residues 3033–3134 (SLLA…AKAE), 3263–3325 (EPKR…SRTI), and 3573–3642 (QERP…EEAK). The stalk stretch occupies residues 3033–3325 (SLLAMKSKEL…QEAEATSRTI (293 aa)). AAA stretches follow at residues 3409-3636 (LTDD…EISV) and 3846-4072 (VRNF…VLYN).

Belongs to the dynein heavy chain family. Consists of at least two heavy chains (alpha and beta), three intermediate chains and several light chains.

The protein resides in the cell projection. Its subcellular location is the cilium. The protein localises to the flagellum. It localises to the cytoplasm. It is found in the cytoskeleton. The protein resides in the flagellum axoneme. In terms of biological role, force generating protein of eukaryotic cilia and flagella. Produces force towards the minus ends of microtubules. Dynein has ATPase activity; the force-producing power stroke is thought to occur on release of ADP. The polypeptide is Dynein beta chain, ciliary (Heliocidaris crassispina (Sea urchin)).